Consider the following 255-residue polypeptide: 1-(5-phosphoribosyl)-5-[(5-phosphoribosylamino)methylideneamino] imidazole-4-carboxamide isomerase (255 aa).

The active-site Proton acceptor is the D8. D129 functions as the Proton donor in the catalytic mechanism.

This sequence belongs to the HisA/HisF family.

It is found in the cytoplasm. It carries out the reaction 1-(5-phospho-beta-D-ribosyl)-5-[(5-phospho-beta-D-ribosylamino)methylideneamino]imidazole-4-carboxamide = 5-[(5-phospho-1-deoxy-D-ribulos-1-ylimino)methylamino]-1-(5-phospho-beta-D-ribosyl)imidazole-4-carboxamide. It functions in the pathway amino-acid biosynthesis; L-histidine biosynthesis; L-histidine from 5-phospho-alpha-D-ribose 1-diphosphate: step 4/9. This is 1-(5-phosphoribosyl)-5-[(5-phosphoribosylamino)methylideneamino] imidazole-4-carboxamide isomerase from Prochlorococcus marinus subsp. pastoris (strain CCMP1986 / NIES-2087 / MED4).